The sequence spans 235 residues: Large ribosomal subunit protein uL1 (235 aa).

Belongs to the universal ribosomal protein uL1 family. Part of the 50S ribosomal subunit.

Its function is as follows. Binds directly to 23S rRNA. The L1 stalk is quite mobile in the ribosome, and is involved in E site tRNA release. Functionally, protein L1 is also a translational repressor protein, it controls the translation of the L11 operon by binding to its mRNA. The sequence is that of Large ribosomal subunit protein uL1 from Prochlorococcus marinus (strain MIT 9312).